Here is an 88-residue protein sequence, read N- to C-terminus: MANTHSAKKATRKITRRTAVNKSRRTLMRGSVRIVEEAIAKGDRDAAIQAMKRAEPELMRAGQQNIVHKNSASRKVSRLTHRIAKLAK.

Residues 1-16 show a composition bias toward basic residues; sequence MANTHSAKKATRKITR. The interval 1–20 is disordered; it reads MANTHSAKKATRKITRRTAV.

Belongs to the bacterial ribosomal protein bS20 family.

Functionally, binds directly to 16S ribosomal RNA. This chain is Small ribosomal subunit protein bS20, found in Nitrobacter hamburgensis (strain DSM 10229 / NCIMB 13809 / X14).